The following is a 225-amino-acid chain: Membrane-spanning 4-domains subfamily A member 4D (225 aa).

Over Met-1–Lys-42 the chain is Cytoplasmic. Residues Val-43–Ile-63 traverse the membrane as a helical segment. At Leu-64 to Ser-73 the chain is on the extracellular side. A helical membrane pass occupies residues Val-74–Ile-94. The Cytoplasmic segment spans residues Ala-95 to Thr-113. A helical transmembrane segment spans residues Ile-114–Val-134. At Phe-135–Asp-148 the chain is on the extracellular side. Residues Val-149–Gly-169 form a helical membrane-spanning segment. The Cytoplasmic segment spans residues Cys-170–Val-225.

The protein belongs to the MS4A family. Expressed in thymus, spleen, peripheral lymph node, liver, kidney, heart, colon, lung, and testes.

Its subcellular location is the membrane. Its function is as follows. May be involved in signal transduction as a component of a multimeric receptor complex. The chain is Membrane-spanning 4-domains subfamily A member 4D (Ms4a4d) from Mus musculus (Mouse).